The primary structure comprises 496 residues: Probable glycine betaine transporter (496 aa).

The next 12 helical transmembrane spans lie at 11-31, 49-69, 89-109, 136-156, 188-208, 219-239, 260-280, 306-326, 341-361, 396-416, 441-461, and 468-488; these read TVLY…VFLP, FGWL…GIAI, FQWF…FWSV, VVFF…GLAL, AIDI…LGLG, IWGI…ITVI, VWLS…VFIL, WVGG…PFVG, FVFA…AIYG, LYAI…VGAA, FWGI…GTAA, and ASIA…YSIL.

This sequence belongs to the BCCT transporter (TC 2.A.15) family.

The protein localises to the cell membrane. Probably acts in the uptake of glycine betaine. May function in the pathway that allows anaerobic methylotrophic growth of D.hafniense using glycine betaine. This chain is Probable glycine betaine transporter, found in Desulfitobacterium hafniense (strain Y51).